The primary structure comprises 223 residues: Alpha-enolase (223 aa).

Ser-8 provides a ligand contact to Mg(2+). Tyr-12 is modified (phosphotyrosine). N6-acetyllysine is present on Lys-25. Glu-39 contributes to the substrate binding site. Residue Lys-61 is modified to N6-acetyllysine. Glu-69 functions as the Proton donor in the catalytic mechanism. Lys-87 bears the N6-acetyllysine; alternate mark. An N6-malonyllysine; alternate modification is found at Lys-87. Lys-87 bears the N6-succinyllysine; alternate mark. Residues Asp-99 and Asp-119 each contribute to the Mg(2+) site. A substrate-binding site is contributed by Asp-119. N6-acetyllysine is present on residues Lys-133 and Lys-141. Residue Lys-141 is the Proton acceptor of the active site. Residues 168–171 and Lys-192 contribute to the substrate site; that span reads SHRS. The required for interaction with PLG stretch occupies residues 202-223; sequence YNQILRIEEELGSKSFRNPLAK. Lys-215 is modified (N6-acetyllysine; alternate). N6-malonyllysine; alternate is present on Lys-215. Residue Lys-215 is modified to N6-succinyllysine; alternate.

This sequence belongs to the enolase family. Mammalian enolase is composed of 3 isozyme subunits, alpha, beta and gamma, which can form homodimers or heterodimers which are cell-type and development-specific. ENO1 interacts with PLG in the neuronal plasma membrane and promotes its activation. The C-terminal lysine is required for this binding. Interacts with ENO4 and PGAM2. Interacts with CMTM6. Mg(2+) serves as cofactor. ISGylated. Post-translationally, lysine 2-hydroxyisobutyrylation (Khib) by p300/EP300 activates the phosphopyruvate hydratase activity.

It is found in the cytoplasm. Its subcellular location is the cell membrane. The enzyme catalyses (2R)-2-phosphoglycerate = phosphoenolpyruvate + H2O. It functions in the pathway carbohydrate degradation; glycolysis; pyruvate from D-glyceraldehyde 3-phosphate: step 4/5. Glycolytic enzyme the catalyzes the conversion of 2-phosphoglycerate to phosphoenolpyruvate. In addition to glycolysis, involved in various processes such as growth control, hypoxia tolerance and allergic responses. May also function in the intravascular and pericellular fibrinolytic system due to its ability to serve as a receptor and activator of plasminogen on the cell surface of several cell-types such as leukocytes and neurons. Stimulates immunoglobulin production. In Mesocricetus auratus (Golden hamster), this protein is Alpha-enolase.